A 434-amino-acid chain; its full sequence is Putative B3 domain-containing protein Os04g0347400 (434 aa).

DNA-binding regions (TF-B3) lie at residues 27-124 (SFHK…FDTT), 150-246 (KPQF…FGIN), and 326-432 (WIKK…DRVE).

The protein resides in the nucleus. This is Putative B3 domain-containing protein Os04g0347400 from Oryza sativa subsp. japonica (Rice).